We begin with the raw amino-acid sequence, 469 residues long: MLKVTVPSCPSSPCSSVTASTENLVPDYWIDGSNRDPLGDFFEVESELGRGATSIVYRCKQKGTQKPYALKVLKKTVDKKIVRTEIGVLLRLSHPNIIKLKEIFETPTEISLVLELVTGGELFDRIVEKGYYSERDARDAVKQILEAVAYLHENGIVHRDLKPENLLYATPAPDAPLKIADFGLSKIVEHQVLMKTVCGTPGYCAPEILRGCAYGPEVDMWSVGIITYILLCGFEPFYDERGDQFMFRRILNCEYYFISPWWDEVSLNAKDLVKKLIVLDPKKRLTTFQALQHPWVTGKAANFVHMDTAQKKLQEFNARRKLKAAVKAVVASSRLGSASSSHTSIQENHKASSDPPSTQDAKDSTDLLGKKMQEEDQEEDQVEAEASADEMRKLQSEEVEKDAGVKEEETSSMVPQDPEDELETDDPEMKRDSEEKLKSVEEEMDPMTEEEAPDAGLGVPQQDAIQPEY.

Phosphoserine; by autocatalysis is present on residues serine 11 and serine 12. Positions 42–296 (FEVESELGRG…TFQALQHPWV (255 aa)) constitute a Protein kinase domain. Residues 48–56 (LGRGATSIV) and lysine 71 each bind ATP. Threonine 53 carries O-linked (GlcNAc) threonine glycosylation. A glycan (O-linked (GlcNAc) serine) is linked at serine 54. Residue serine 133 is glycosylated (O-linked (GlcNAc) serine). Residue aspartate 160 is the Proton acceptor of the active site. O-linked (GlcNAc) serine glycosylation is present at serine 185. Residue threonine 196 is modified to Phosphothreonine. An autoinhibitory domain region spans residues 297 to 336 (TGKAANFVHMDTAQKKLQEFNARRKLKAAVKAVVASSRLG). The interval 302-319 (NFVHMDTAQKKLQEFNAR) is PP2A-binding. Residues 318–337 (ARRKLKAAVKAVVASSRLGS) form a calmodulin-binding region. Serine 332 carries the post-translational modification Phosphoserine; by autocatalysis. The tract at residues 336 to 469 (GSASSSHTSI…PQQDAIQPEY (134 aa)) is disordered. Residue serine 337 is modified to Phosphoserine. 3 O-linked (GlcNAc) serine glycosylation sites follow: serine 340, serine 341, and serine 352. Residues 360–374 (DAKDSTDLLGKKMQE) are compositionally biased toward basic and acidic residues. Positions 375 to 388 (EDQEEDQVEAEASA) are enriched in acidic residues. Residues 389 to 409 (DEMRKLQSEEVEKDAGVKEEE) show a composition bias toward basic and acidic residues. Over residues 417–426 (DPEDELETDD) the composition is skewed to acidic residues. The span at 427–441 (PEMKRDSEEKLKSVE) shows a compositional bias: basic and acidic residues. A phosphoserine mark is found at serine 433 and serine 439. The span at 442 to 453 (EEMDPMTEEEAP) shows a compositional bias: acidic residues.

Belongs to the protein kinase superfamily. CAMK Ser/Thr protein kinase family. CaMK subfamily. In terms of assembly, monomer. Interacts with protein phosphatase 2A (PPP2CA/PPP2CB); the interaction is mutually exclusive with binding to Ca(2+)/calmodulin. In terms of processing, phosphorylated by CaMKK1 and CaMKK2 on Thr-196. Dephosphorylated by protein phosphatase 2A. Autophosphorylated on Ser-11 and Ser-12. Glycosylation at Ser-185 modulates the phosphorylation of CaMK4 at Thr-196 and negatively regulates its activity toward CREB1 in basal conditions and during early inomycin stimulation. In terms of tissue distribution, expressed in brain and testis.

Its subcellular location is the cytoplasm. It is found in the nucleus. The enzyme catalyses L-seryl-[protein] + ATP = O-phospho-L-seryl-[protein] + ADP + H(+). It catalyses the reaction L-threonyl-[protein] + ATP = O-phospho-L-threonyl-[protein] + ADP + H(+). Its activity is regulated as follows. Activated by Ca(2+)/calmodulin. Binding of calmodulin results in conformational change that relieves intrasteric autoinhibition and allows phosphorylation of Thr-196 within the activation loop by CaMKK1 or CaMKK2. Phosphorylation of Thr-196 results in a 10-20-fold increase in total activity to generate Ca(2+)/calmodulin-independent activity. Autophosphorylation of the N-terminus Ser-11 and Ser-12 is required for full activation. Inactivated by protein phosphatase 2A (PPP2CA/PPP2CB) which dephosphorylates Thr-196, thereby terminating autonomous activity and helping to maintain the enzyme in its autoinhibited state. Its function is as follows. Calcium/calmodulin-dependent protein kinase that operates in the calcium-triggered CaMKK-CaMK4 signaling cascade and regulates, mainly by phosphorylation, the activity of several transcription activators, such as CREB1, MEF2D, JUN and RORA, which play pivotal roles in immune response, inflammation, and memory consolidation. In the thymus, regulates the CD4(+)/CD8(+) double positive thymocytes selection threshold during T-cell ontogeny. In CD4 memory T-cells, is required to link T-cell antigen receptor (TCR) signaling to the production of IL2, IFNG and IL4 (through the regulation of CREB and MEF2). Regulates the differentiation and survival phases of osteoclasts and dendritic cells (DCs). Mediates DCs survival by linking TLR4 and the regulation of temporal expression of BCL2. Phosphorylates the transcription activator CREB1 on 'Ser-133' in hippocampal neuron nuclei and contribute to memory consolidation and long term potentiation (LTP) in the hippocampus. Can activate the MAP kinases MAPK1/ERK2, MAPK8/JNK1 and MAPK14/p38 and stimulate transcription through the phosphorylation of ELK1 and ATF2. Can also phosphorylate in vitro CREBBP, PRM2, MEF2A and STMN1/OP18. May be involved in spermatogenesis. This is Calcium/calmodulin-dependent protein kinase type IV (Camk4) from Mus musculus (Mouse).